The following is a 267-amino-acid chain: S-adenosylmethionine decarboxylase proenzyme (267 aa).

The active-site Schiff-base intermediate with substrate; via pyruvic acid is the serine 114. Serine 114 carries the post-translational modification Pyruvic acid (Ser); by autocatalysis. Histidine 119 (proton acceptor; for processing activity) is an active-site residue. The Proton donor; for catalytic activity role is filled by cysteine 142.

It belongs to the prokaryotic AdoMetDC family. Type 2 subfamily. Heterooctamer of four alpha and four beta chains arranged as a tetramer of alpha/beta heterodimers. Pyruvate serves as cofactor. Post-translationally, is synthesized initially as an inactive proenzyme. Formation of the active enzyme involves a self-maturation process in which the active site pyruvoyl group is generated from an internal serine residue via an autocatalytic post-translational modification. Two non-identical subunits are generated from the proenzyme in this reaction, and the pyruvate is formed at the N-terminus of the alpha chain, which is derived from the carboxyl end of the proenzyme. The post-translation cleavage follows an unusual pathway, termed non-hydrolytic serinolysis, in which the side chain hydroxyl group of the serine supplies its oxygen atom to form the C-terminus of the beta chain, while the remainder of the serine residue undergoes an oxidative deamination to produce ammonia and the pyruvoyl group blocking the N-terminus of the alpha chain.

It catalyses the reaction S-adenosyl-L-methionine + H(+) = S-adenosyl 3-(methylsulfanyl)propylamine + CO2. Its pathway is amine and polyamine biosynthesis; S-adenosylmethioninamine biosynthesis; S-adenosylmethioninamine from S-adenosyl-L-methionine: step 1/1. Functionally, catalyzes the decarboxylation of S-adenosylmethionine to S-adenosylmethioninamine (dcAdoMet), the propylamine donor required for the synthesis of the polyamines spermine and spermidine from the diamine putrescine. The polypeptide is S-adenosylmethionine decarboxylase proenzyme (Erwinia tasmaniensis (strain DSM 17950 / CFBP 7177 / CIP 109463 / NCPPB 4357 / Et1/99)).